The chain runs to 217 residues: GTP cyclohydrolase 1 (217 aa).

Residues Cys-109, His-112, and Cys-180 each contribute to the Zn(2+) site.

It belongs to the GTP cyclohydrolase I family. As to quaternary structure, toroid-shaped homodecamer, composed of two pentamers of five dimers.

The enzyme catalyses GTP + H2O = 7,8-dihydroneopterin 3'-triphosphate + formate + H(+). It participates in cofactor biosynthesis; 7,8-dihydroneopterin triphosphate biosynthesis; 7,8-dihydroneopterin triphosphate from GTP: step 1/1. In Vibrio campbellii (strain ATCC BAA-1116), this protein is GTP cyclohydrolase 1.